We begin with the raw amino-acid sequence, 146 residues long: Hemoglobin subunit beta (146 aa).

Valine 1 bears the N-acetylvaline mark. Positions 2–146 constitute a Globin domain; the sequence is HLTAEEKSAV…VANALAHKYH (145 aa). Serine 44 is modified (phosphoserine). Lysine 59 is modified (N6-acetyllysine). Residue histidine 63 coordinates heme b. Lysine 82 carries the post-translational modification N6-acetyllysine. Histidine 92 is a binding site for heme b. S-nitrosocysteine is present on cysteine 93. An N6-acetyllysine modification is found at lysine 144.

This sequence belongs to the globin family. As to quaternary structure, heterotetramer of two alpha chains and two beta chains. In terms of tissue distribution, red blood cells.

In terms of biological role, involved in oxygen transport from the lung to the various peripheral tissues. The sequence is that of Hemoglobin subunit beta from Tamias merriami (Merriam's chipmunk).